Reading from the N-terminus, the 1183-residue chain is Translation initiation factor IF-2 (1183 aa).

Disordered regions lie at residues 55–512 and 538–574; these read KSKT…KVHI and ASLARPSKPKVGKRNNGKPLTALKKRKKETTRQRQRR. Positions 83–99 are enriched in basic and acidic residues; sequence TQKDQKTEPKKKNHDQT. Composition is skewed to polar residues over residues 100–143 and 165–177; these read ELSQ…QITA and KPLTQAESTIPQS. The segment covering 220–229 has biased composition (basic and acidic residues); the sequence is PKIDIQDKKP. Residues 231–252 show a composition bias toward polar residues; it reads QPNNQKAKTRINQGEISPQKVG. Over residues 253–267 the composition is skewed to low complexity; that stretch reads QGNIQKIKSQNKQNQ. A compositionally biased stretch (basic and acidic residues) spans 288-304; it reads IRREKPVNKPHTNEVRN. Composition is skewed to polar residues over residues 324–349 and 357–367; these read QGLSNRPGSNNKIGGTGRPGSQNRQG and NRTTQGQNRPG. The span at 485–499 shows a compositional bias: basic and acidic residues; the sequence is GRPDWDDSAKLDALR. Basic residues-rich tracts occupy residues 544–553 and 560–574; these read SKPKVGKRNN and LKKRKKETTRQRQRR. The region spanning 675–847 is the tr-type G domain; that stretch reads RRPPVVTVMG…VLLVTEVEDL (173 aa). The tract at residues 684–691 is G1; it reads GHVDHGKT. Residue 684–691 coordinates GTP; sequence GHVDHGKT. The tract at residues 709-713 is G2; sequence GITQH. The tract at residues 734 to 737 is G3; the sequence is DTPG. GTP is bound by residues 734–738 and 788–791; these read DTPGH and NKID. A G4 region spans residues 788–791; that stretch reads NKID. A G5 region spans residues 824–826; that stretch reads SAI.

This sequence belongs to the TRAFAC class translation factor GTPase superfamily. Classic translation factor GTPase family. IF-2 subfamily.

It is found in the cytoplasm. In terms of biological role, one of the essential components for the initiation of protein synthesis. Protects formylmethionyl-tRNA from spontaneous hydrolysis and promotes its binding to the 30S ribosomal subunits. Also involved in the hydrolysis of GTP during the formation of the 70S ribosomal complex. The protein is Translation initiation factor IF-2 of Prochlorococcus marinus (strain NATL1A).